The primary structure comprises 104 residues: UPF0145 protein STH1265 (104 aa).

The protein belongs to the UPF0145 family.

The polypeptide is UPF0145 protein STH1265 (Symbiobacterium thermophilum (strain DSM 24528 / JCM 14929 / IAM 14863 / T)).